The primary structure comprises 432 residues: D-amino acid dehydrogenase 1 (432 aa).

Position 3–17 (3–17 (VLVLGSGVIGTASAY)) interacts with FAD. Positions 410 to 432 (GLDISRYSNSPENAKNAHPAPAH) are disordered.

The protein belongs to the DadA oxidoreductase family. Requires FAD as cofactor.

The catalysed reaction is a D-alpha-amino acid + A + H2O = a 2-oxocarboxylate + AH2 + NH4(+). Its pathway is amino-acid degradation; D-alanine degradation; NH(3) and pyruvate from D-alanine: step 1/1. In terms of biological role, catalyzes the oxidative deamination of D-amino acids. Has very broad substrate specificity; all the D-amino acids tested can be used as the substrate except D-Glu and D-Gln. Participates in the utilization of several D-amino acids as the sole source of nitrogen, i.e. D-alanine, D-histidine, D-phenylalanine, D-serine, D-threonine, and D-valine. The chain is D-amino acid dehydrogenase 1 (dadA1) from Pseudomonas aeruginosa (strain ATCC 15692 / DSM 22644 / CIP 104116 / JCM 14847 / LMG 12228 / 1C / PRS 101 / PAO1).